Reading from the N-terminus, the 134-residue chain is Interleukin-5 (134 aa).

A signal peptide spans 1 to 19; sequence MRMLLHLSLLALGAAYVYA. An O-linked (GalNAc...) threonine glycan is attached at T22. N-linked (GlcNAc...) asparagine glycans are attached at residues N47 and N90.

It belongs to the IL-5 family. In terms of assembly, homodimer; disulfide-linked. Interacts with IL5RA. Interacts with CSF2RB.

The protein resides in the secreted. Functionally, homodimeric cytokine expressed predominantly by T-lymphocytes and NK cells that plays an important role in the survival, differentiation, and chemotaxis of eosinophils. Also acts on activated and resting B-cells to induce immunoglobulin production, growth, and differentiation. Mechanistically, exerts its biological effects through a receptor composed of IL5RA subunit and the cytokine receptor common subunit beta/CSF2RB. Binding to the receptor leads to activation of various kinases including LYN, SYK and JAK2 and thereby propagates signals through the RAS-MAPK and JAK-STAT5 pathways respectively. This is Interleukin-5 (IL5) from Macaca mulatta (Rhesus macaque).